We begin with the raw amino-acid sequence, 895 residues long: Eukaryotic translation initiation factor 3 subunit C (895 aa).

The disordered stretch occupies residues 1 to 108 (MSGFFRKVGD…DSDSEEEVKK (108 aa)). Acidic residues-rich tracts occupy residues 11 to 31 (SDSESDISSSEEELSELESGD) and 52 to 75 (DDSDSDDDDSDDDDQDSLDSDDDN). The PCI domain maps to 638 to 812 (FHMHINLELL…NVVSFHRLEL (175 aa)). Over residues 838–860 (DAKLGEGKEQRSGAGGERGDREG) the composition is skewed to basic and acidic residues. The interval 838–895 (DAKLGEGKEQRSGAGGERGDREGGQPGGRRERRGGSAARGRGRGRGRAQQFQALGQKV) is disordered. Residues 884 to 895 (RAQQFQALGQKV) are compositionally biased toward low complexity.

This sequence belongs to the eIF-3 subunit C family. Component of the eukaryotic translation initiation factor 3 (eIF-3) complex.

The protein resides in the cytoplasm. Its function is as follows. Component of the eukaryotic translation initiation factor 3 (eIF-3) complex, which is involved in protein synthesis of a specialized repertoire of mRNAs and, together with other initiation factors, stimulates binding of mRNA and methionyl-tRNAi to the 40S ribosome. The eIF-3 complex specifically targets and initiates translation of a subset of mRNAs involved in cell proliferation. The protein is Eukaryotic translation initiation factor 3 subunit C of Mycosarcoma maydis (Corn smut fungus).